The following is a 480-amino-acid chain: Siroheme synthase 2 (480 aa).

The precorrin-2 dehydrogenase /sirohydrochlorin ferrochelatase stretch occupies residues 1–202 (MDYLPMFARL…QDWQSAETWL (202 aa)). NAD(+)-binding positions include 22–23 (EV) and 43–44 (PE). Ser126 carries the post-translational modification Phosphoserine. Residues 214 to 480 (GEVVLVGAGP…GCDLKLVNLA (267 aa)) are uroporphyrinogen-III C-methyltransferase. Pro223 is a binding site for S-adenosyl-L-methionine. The active-site Proton acceptor is the Asp246. The active-site Proton donor is the Lys268. Residues 299-301 (GGD), 329-330 (TA), Met381, and Gly410 each bind S-adenosyl-L-methionine.

In the N-terminal section; belongs to the precorrin-2 dehydrogenase / sirohydrochlorin ferrochelatase family. The protein in the C-terminal section; belongs to the precorrin methyltransferase family.

The enzyme catalyses uroporphyrinogen III + 2 S-adenosyl-L-methionine = precorrin-2 + 2 S-adenosyl-L-homocysteine + H(+). The catalysed reaction is precorrin-2 + NAD(+) = sirohydrochlorin + NADH + 2 H(+). It carries out the reaction siroheme + 2 H(+) = sirohydrochlorin + Fe(2+). The protein operates within cofactor biosynthesis; adenosylcobalamin biosynthesis; precorrin-2 from uroporphyrinogen III: step 1/1. Its pathway is cofactor biosynthesis; adenosylcobalamin biosynthesis; sirohydrochlorin from precorrin-2: step 1/1. It participates in porphyrin-containing compound metabolism; siroheme biosynthesis; precorrin-2 from uroporphyrinogen III: step 1/1. It functions in the pathway porphyrin-containing compound metabolism; siroheme biosynthesis; siroheme from sirohydrochlorin: step 1/1. The protein operates within porphyrin-containing compound metabolism; siroheme biosynthesis; sirohydrochlorin from precorrin-2: step 1/1. Its function is as follows. Multifunctional enzyme that catalyzes the SAM-dependent methylations of uroporphyrinogen III at position C-2 and C-7 to form precorrin-2 via precorrin-1. Then it catalyzes the NAD-dependent ring dehydrogenation of precorrin-2 to yield sirohydrochlorin. Finally, it catalyzes the ferrochelation of sirohydrochlorin to yield siroheme. The sequence is that of Siroheme synthase 2 from Aeromonas salmonicida (strain A449).